The primary structure comprises 443 residues: ATP-dependent protease ATPase subunit HslU (443 aa).

ATP contacts are provided by residues I20, 62-67 (GVGKTE), D255, E321, and R393.

The protein belongs to the ClpX chaperone family. HslU subfamily. In terms of assembly, a double ring-shaped homohexamer of HslV is capped on each side by a ring-shaped HslU homohexamer. The assembly of the HslU/HslV complex is dependent on binding of ATP.

The protein resides in the cytoplasm. Its function is as follows. ATPase subunit of a proteasome-like degradation complex; this subunit has chaperone activity. The binding of ATP and its subsequent hydrolysis by HslU are essential for unfolding of protein substrates subsequently hydrolyzed by HslV. HslU recognizes the N-terminal part of its protein substrates and unfolds these before they are guided to HslV for hydrolysis. In Helicobacter pylori (strain ATCC 700392 / 26695) (Campylobacter pylori), this protein is ATP-dependent protease ATPase subunit HslU.